An 808-amino-acid chain; its full sequence is Type VI secretion system spike protein VgrG4b (808 aa).

It belongs to the VgrG protein family.

The protein localises to the secreted. Functionally, part of the H2 type VI secretion system (H2-T6SS) specialized secretion system, which delivers several virulence factors in both prokaryotic and eukaryotic cells during infection. Allows the delivery of the phospholipase effector PldA to target cells where it exerts its toxicity. The chain is Type VI secretion system spike protein VgrG4b from Pseudomonas aeruginosa (strain ATCC 15692 / DSM 22644 / CIP 104116 / JCM 14847 / LMG 12228 / 1C / PRS 101 / PAO1).